A 632-amino-acid polypeptide reads, in one-letter code: Nucleoside triphosphatase I (632 aa).

A Helicase ATP-binding domain is found at 42–204; sequence FLGLDKMHSL…VMLVNLLRPK (163 aa). Residue 55 to 62 coordinates ATP; that stretch reads HETGVGKT. The DEXH box signature appears at 141–144; it reads DECH. Positions 367-532 constitute a Helicase C-terminal domain; that stretch reads KFTDVCLRIL…EFTQLFKVFK (166 aa). The binding to the cap-specific mRNA (nucleoside-2'-O-)-methyltransferase stretch occupies residues 457 to 524; the sequence is DIFILDMTWN…DIIRTKSKEF (68 aa).

Belongs to the helicase family. NPH I subfamily. In terms of assembly, monomer. Interacts (via C-terminus) with RAP94 (via N-terminus). Interacts with the cap-specific mRNA (nucleoside-2'-O-)-methyltransferase.

The protein localises to the virion. It catalyses the reaction a ribonucleoside 5'-triphosphate + H2O = a ribonucleoside 5'-diphosphate + phosphate + H(+). In terms of biological role, DNA-dependent ATPase required for providing the needed energy to achieve the termination of early transcripts. Acts in concert with the RAP94 subunit of the virion RNA polymerase and the capping enzyme/VTF to catalyze release of UUUUUNU-containing nascent RNA from the elongation complex. NPH-I must bind ssDNA in order to exhibit ATPase activity. This Myxoma virus (strain Lausanne) (MYXV) protein is Nucleoside triphosphatase I (NPH1).